Consider the following 450-residue polypeptide: tRNA-2-methylthio-N(6)-dimethylallyladenosine synthase (450 aa).

One can recognise an MTTase N-terminal domain in the interval 8–128; sequence KRLYIKTYGC…LPELIARAHR (121 aa). Residues Cys-17, Cys-53, Cys-91, Cys-166, Cys-170, and Cys-173 each coordinate [4Fe-4S] cluster. The 231-residue stretch at 152-382 folds into the Radical SAM core domain; sequence RPTGVTAFLT…QALLEQQQLA (231 aa). A TRAM domain is found at 385-447; that stretch reads AAQAGRVLPV…RNSLAGVLEL (63 aa).

Belongs to the methylthiotransferase family. MiaB subfamily. In terms of assembly, monomer. Requires [4Fe-4S] cluster as cofactor.

The protein resides in the cytoplasm. The catalysed reaction is N(6)-dimethylallyladenosine(37) in tRNA + (sulfur carrier)-SH + AH2 + 2 S-adenosyl-L-methionine = 2-methylsulfanyl-N(6)-dimethylallyladenosine(37) in tRNA + (sulfur carrier)-H + 5'-deoxyadenosine + L-methionine + A + S-adenosyl-L-homocysteine + 2 H(+). Catalyzes the methylthiolation of N6-(dimethylallyl)adenosine (i(6)A), leading to the formation of 2-methylthio-N6-(dimethylallyl)adenosine (ms(2)i(6)A) at position 37 in tRNAs that read codons beginning with uridine. This is tRNA-2-methylthio-N(6)-dimethylallyladenosine synthase from Phenylobacterium zucineum (strain HLK1).